Reading from the N-terminus, the 172-residue chain is Adenine phosphoribosyltransferase (172 aa).

This sequence belongs to the purine/pyrimidine phosphoribosyltransferase family. In terms of assembly, homodimer.

Its subcellular location is the cytoplasm. It carries out the reaction AMP + diphosphate = 5-phospho-alpha-D-ribose 1-diphosphate + adenine. Its pathway is purine metabolism; AMP biosynthesis via salvage pathway; AMP from adenine: step 1/1. Catalyzes a salvage reaction resulting in the formation of AMP, that is energically less costly than de novo synthesis. The polypeptide is Adenine phosphoribosyltransferase (Microcystis aeruginosa (strain NIES-843 / IAM M-2473)).